A 308-amino-acid chain; its full sequence is ADP-L-glycero-D-manno-heptose-6-epimerase (308 aa).

NADP(+) is bound by residues M10–I11, D31–N32, K38, K53, E75–S79, and N92. Y140 acts as the Proton acceptor in catalysis. K144 provides a ligand contact to NADP(+). N169 provides a ligand contact to substrate. NADP(+)-binding residues include V170 and K178. The active-site Proton acceptor is the K178. Substrate is bound by residues S180, H187, F201 to S204, R209, and Y272.

It belongs to the NAD(P)-dependent epimerase/dehydratase family. HldD subfamily. In terms of assembly, homopentamer. NADP(+) is required as a cofactor.

It catalyses the reaction ADP-D-glycero-beta-D-manno-heptose = ADP-L-glycero-beta-D-manno-heptose. It participates in nucleotide-sugar biosynthesis; ADP-L-glycero-beta-D-manno-heptose biosynthesis; ADP-L-glycero-beta-D-manno-heptose from D-glycero-beta-D-manno-heptose 7-phosphate: step 4/4. Its function is as follows. Catalyzes the interconversion between ADP-D-glycero-beta-D-manno-heptose and ADP-L-glycero-beta-D-manno-heptose via an epimerization at carbon 6 of the heptose. The polypeptide is ADP-L-glycero-D-manno-heptose-6-epimerase (Actinobacillus pleuropneumoniae serotype 7 (strain AP76)).